A 161-amino-acid chain; its full sequence is MSLRPIETAIASLTMLMLQGCAHAGKLDEKVPYPQPADGYQRNVIHLPMLADEENTKLELQVGKTMQVDCNHHSFGATVVEHTVKGWGYPYYEVNSIGGPISTRMACPSGTETSKFVAAHGNGFVVRYNSKLPVVVYIPQGFELRYRTWQPVQEFQTVPQD.

An N-terminal signal peptide occupies residues 1–24 (MSLRPIETAIASLTMLMLQGCAHA).

It belongs to the protease inhibitor I11 (ecotin) family.

The chain is Putative ecotin-like protein from Methylobacillus flagellatus (strain ATCC 51484 / DSM 6875 / VKM B-1610 / KT).